The chain runs to 298 residues: Protein REVEILLE 8 (298 aa).

Positions M1–E44 are disordered. The 55-residue stretch at T38 to Q92 folds into the HTH myb-type domain. The H-T-H motif DNA-binding region spans W65–F88. The tract at residues T96–M123 is disordered.

The protein resides in the nucleus. Functionally, transcriptional activator of evening element (EE)-containing clock-controlled genes. Forms a negative feedback loop with APRR5. Regulates the pattern of histone H3 acetylation of the TOC1 promoter. RVE4, RVE6 and RVE8 are components of the circadian system acting synergistically to regulate flowering time, redundantly to regulate leaf growth, and antagonistically to regulate hypocotyl elongation; their action seems independent of ZTL and HY5. The protein is Protein REVEILLE 8 of Arabidopsis thaliana (Mouse-ear cress).